The chain runs to 399 residues: Bone morphogenetic protein 8B (399 aa).

The first 19 residues, 1–19 (MAARPGLLWLLGLALCVLG), serve as a signal peptide directing secretion. The propeptide occupies 20 to 260 (GGHLSHPPHV…ANQSPVRAPR (241 aa)). N-linked (GlcNAc...) asparagine glycans are attached at residues N155 and N340. 3 cysteine pairs are disulfide-bonded: C298/C364, C327/C396, and C331/C398.

It belongs to the TGF-beta family. Homodimer; disulfide-linked. As to expression, expressed in testis. Expressed in decidual cells of the uterus and in trophoblast cells of the labyrinthine region of the placenta and in the inner root sheath of hair follicles of early postnatal skin. Expressed in the extraembryonic ectoderm in pregastrula and gastrula stage mouse embryos. Expressed in brown adipose tissue and brain.

It is found in the secreted. Induces cartilage and bone formation. May be the osteoinductive factor responsible for the phenomenon of epithelial osteogenesis. Plays a role in calcium regulation and bone homeostasis. Involved in the generation of primordial germ cells; this function involves Bmp4 in a synergistic manner though separate receptor complexes seem to be involved. Required for the initiation and maintenance of spermatogenesis. Signaling protein involved in regulation of thermogenesis and energy balance. Proposed to increase the peripheral response of brown adipose tissue (BAT) to adrenergic stimulation while acting centrally in the hypothalamus to increase sympathetic output to BAT. In Mus musculus (Mouse), this protein is Bone morphogenetic protein 8B (Bmp8b).